The chain runs to 188 residues: Mitochondrial import receptor subunit TOM20 homolog (188 aa).

The Mitochondrial intermembrane segment spans residues Met1–Asn12. A helical transmembrane segment spans residues Val13–Phe31. Over Asp32–Glu188 the chain is Cytoplasmic. Disordered stretches follow at residues Lys48–Gly67 and Ala155–Glu188. The segment covering Met58–Gly67 has biased composition (low complexity).

Belongs to the Tom20 family. In terms of assembly, forms part of the preprotein translocase complex of the outer mitochondrial membrane (TOM complex).

The protein localises to the mitochondrion outer membrane. In terms of biological role, central component of the receptor complex responsible for the recognition and translocation of cytosolically synthesized mitochondrial preproteins. Together with TOM22 functions as the transit peptide receptor at the surface of the mitochondrion outer membrane and facilitates the movement of preproteins into the translocation pore. In Caenorhabditis briggsae, this protein is Mitochondrial import receptor subunit TOM20 homolog (tomm-20).